Consider the following 229-residue polypeptide: Prolactin (229 aa).

The N-terminal stretch at 1 to 30 (MDSKGSAQKGSRLLLLLVVSNLLLCQGVVS) is a signal peptide. The cysteines at positions 34 and 41 are disulfide-linked. Serine 56 carries the phosphoserine modification. The N-linked (GlcNAc...) asparagine; partial glycan is linked to asparagine 61. Residues serine 64 and serine 120 each carry the phosphoserine modification. Disulfide bonds link cysteine 88–cysteine 204 and cysteine 221–cysteine 229.

It belongs to the somatotropin/prolactin family. Interacts with PRLR.

The protein localises to the secreted. Its function is as follows. Prolactin acts primarily on the mammary gland by promoting lactation, mammogenesis, mitogenesis and osmoregulation. The sequence is that of Prolactin (PRL) from Ovis aries (Sheep).